We begin with the raw amino-acid sequence, 617 residues long: Phosphatidylinositol-3,5-bisphosphate 3-phosphatase MTMR6 (617 aa).

The region spanning 1 to 101 (MEHIRTTKVE…YNSLLQLSKQ (101 aa)) is the GRAM domain. Residues 2-141 (EHIRTTKVEQ…AEYERMGVPN (140 aa)) form an interaction with RAB1B region. Tyr108 carries the post-translational modification Phosphotyrosine. A Myotubularin phosphatase domain is found at 124–499 (GWQLIDLAAE…FNFKFWRNMY (376 aa)). Residues Asn248, Asn273, and Ile274 each coordinate a 1,2-diacyl-sn-glycero-3-phospho-(1D-myo-inositol-3,5-bisphosphate). Residues Asn248, Asn273, and Ile274 each contribute to the a 1,2-diacyl-sn-glycero-3-phospho-(1D-myo-inositol-3-phosphate) site. Cys336 functions as the Phosphocysteine intermediate in the catalytic mechanism. A 1,2-diacyl-sn-glycero-3-phospho-(1D-myo-inositol-3,5-bisphosphate) is bound by residues Ser337, Asp338, Gly339, Trp340, Asp341, Arg342, Lys378, and Arg382. 6 residues coordinate a 1,2-diacyl-sn-glycero-3-phospho-(1D-myo-inositol-3-phosphate): Ser337, Asp338, Gly339, Trp340, Asp341, and Arg342. Arg382 is an a 1,2-diacyl-sn-glycero-3-phospho-(1D-myo-inositol-3-phosphate) binding site. Phosphoserine is present on residues Ser557, Ser585, and Ser607.

The protein belongs to the protein-tyrosine phosphatase family. Non-receptor class myotubularin subfamily. In terms of assembly, homodimer. Heterodimer (via C-terminus) with MTMR9 (via C-terminus). Interacts with ALKBH4. Interacts with KCNN4. Interacts (via GRAM domain) with RAB1B (in GDP-bound form); the interaction regulates MTMR6 recruitment to the endoplasmic reticulum-Golgi intermediate compartment. As to expression, isoform 1: Ubiquitously expressed including in heart, brain, spleen, lung, liver, muscle, kidney and testis (at protein level). Isoform 2: Expressed in testis (at protein level).

Its subcellular location is the cytoplasm. It localises to the endoplasmic reticulum-Golgi intermediate compartment. It is found in the cell projection. The protein resides in the ruffle membrane. The protein localises to the endoplasmic reticulum. It carries out the reaction a 1,2-diacyl-sn-glycero-3-phospho-(1D-myo-inositol-3,5-bisphosphate) + H2O = a 1,2-diacyl-sn-glycero-3-phospho-(1D-myo-inositol-5-phosphate) + phosphate. The catalysed reaction is a 1,2-diacyl-sn-glycero-3-phospho-(1D-myo-inositol-3-phosphate) + H2O = a 1,2-diacyl-sn-glycero-3-phospho-(1D-myo-inositol) + phosphate. It catalyses the reaction 1,2-dioctanoyl-sn-glycero-3-phospho-(1D-myo-inositol-3,5-bisphosphate) + H2O = 1,2-dioctanoyl-sn-glycero-3-phospho-(1D-myo-inositol-5-phosphate) + phosphate. The enzyme catalyses 1,2-dioctanoyl-sn-glycero-3-phospho-(1-D-myo-inositol-3-phosphate) + H2O = 1,2-dioctanoyl-sn-glycero-3-phospho-(1D-myo-inositol) + phosphate. Allosterically activated by phosphatidylserine and/or phosphatidylinositol 4-phosphate (PtdIns(4)P), and phosphatidylinositol 5-phosphate (PtdIns(5)P). Interaction with MTMR9 increases catalytic activity towards phosphatidylinositol 3,5-bisphosphate. Functionally, lipid phosphatase that specifically dephosphorylates the D-3 position of phosphatidylinositol 3-phosphate and phosphatidylinositol 3,5-bisphosphate, generating phosphatidylinositol and phosphatidylinositol 5-phosphate. Binds with high affinity to phosphatidylinositol 3,5-bisphosphate (PtdIns(3,5)P2) but also to phosphatidylinositol 3-phosphate (PtdIns(3)P), phosphatidylinositol 4-phosphate (PtdIns(4)P), and phosphatidylinositol 5-phosphate (PtdIns(5)P), phosphatidic acid and phosphatidylserine. Negatively regulates ER-Golgi protein transport. Probably in association with MTMR9, plays a role in the late stages of macropinocytosis by dephosphorylating phosphatidylinositol 3-phosphate in membrane ruffles. Acts as a negative regulator of KCNN4/KCa3.1 channel activity in CD4(+) T-cells possibly by decreasing intracellular levels of phosphatidylinositol 3-phosphate. Negatively regulates proliferation of reactivated CD4(+) T-cells. In complex with MTMR9, negatively regulates DNA damage-induced apoptosis. The formation of the MTMR6-MTMR9 complex stabilizes both MTMR6 and MTMR9 protein levels. In Mus musculus (Mouse), this protein is Phosphatidylinositol-3,5-bisphosphate 3-phosphatase MTMR6.